The primary structure comprises 150 residues: 6,7-dimethyl-8-ribityllumazine synthase (150 aa).

Residues F11, 43–45 (VYD), and 67–69 (AVI) each bind 5-amino-6-(D-ribitylamino)uracil. 72-73 (AT) contributes to the (2S)-2-hydroxy-3-oxobutyl phosphate binding site. Catalysis depends on H75, which acts as the Proton donor. L100 is a binding site for 5-amino-6-(D-ribitylamino)uracil. R115 provides a ligand contact to (2S)-2-hydroxy-3-oxobutyl phosphate.

It belongs to the DMRL synthase family.

It carries out the reaction (2S)-2-hydroxy-3-oxobutyl phosphate + 5-amino-6-(D-ribitylamino)uracil = 6,7-dimethyl-8-(1-D-ribityl)lumazine + phosphate + 2 H2O + H(+). It functions in the pathway cofactor biosynthesis; riboflavin biosynthesis; riboflavin from 2-hydroxy-3-oxobutyl phosphate and 5-amino-6-(D-ribitylamino)uracil: step 1/2. Catalyzes the formation of 6,7-dimethyl-8-ribityllumazine by condensation of 5-amino-6-(D-ribitylamino)uracil with 3,4-dihydroxy-2-butanone 4-phosphate. This is the penultimate step in the biosynthesis of riboflavin. This is 6,7-dimethyl-8-ribityllumazine synthase from Pyrobaculum neutrophilum (strain DSM 2338 / JCM 9278 / NBRC 100436 / V24Sta) (Thermoproteus neutrophilus).